A 495-amino-acid polypeptide reads, in one-letter code: Potassium voltage-gated channel subfamily A member 1 (495 aa).

A disordered region spans residues 1–30; that stretch reads MTVMSGENVDEASAAPGHPQDGSYPRQADH. Positions 1–128 are tetramerization domain; sequence MTVMSGENVD…FYELGEEAME (128 aa). Residues 1-164 lie on the Cytoplasmic side of the membrane; it reads MTVMSGENVD…LLFEYPESSG (164 aa). The residue at position 23 (Ser-23) is a Phosphoserine. A helical membrane pass occupies residues 165 to 186; sequence PARVIAIVSVMVILISIVIFCL. Topologically, residues 187–220 are extracellular; that stretch reads ETLPELKDDKDFTGTVHRIDNTTVIYNSNIFTDP. A glycan (N-linked (GlcNAc...) asparagine) is linked at Asn-207. The helical transmembrane segment at 221–242 threads the bilayer; the sequence is FFIVETLCIIWFSFELVVRFFA. Residue Cys-243 is the site of S-palmitoyl cysteine attachment. Residues 243 to 253 lie on the Cytoplasmic side of the membrane; that stretch reads CPSKTDFFKNI. A helical membrane pass occupies residues 254-274; that stretch reads MNFIDIVAIIPYFITLGTEIA. Residues 275-287 lie on the Extracellular side of the membrane; the sequence is EQEGNQKGEQATS. Residues 288–308 traverse the membrane as a helical; Voltage-sensor segment; the sequence is LAILRVIRLVRVFRIFKLSRH. Residues 309–323 lie on the Cytoplasmic side of the membrane; that stretch reads SKGLQILGQTLKASM. The S4-S5 linker stretch occupies residues 310–323; sequence KGLQILGQTLKASM. Phosphoserine; by PKA is present on Ser-322. The helical transmembrane segment at 324–345 threads the bilayer; sequence RELGLLIFFLFIGVILFSSAVY. Over 346–359 the chain is Extracellular; the sequence is FAEAEEAESHFSSI. The helical intramembrane region spans 360–371; that stretch reads PDAFWWAVVSMT. The Selectivity filter signature appears at 372–377; the sequence is TVGYGD. An intramembrane segment occupies 372 to 379; sequence TVGYGDMY. Residues 380 to 386 lie on the Extracellular side of the membrane; that stretch reads PVTIGGK. Residues 387–415 form a helical membrane-spanning segment; it reads IVGSLCAIAGVLTIALPVPVIVSNFNYFY. Over 416-495 the chain is Cytoplasmic; it reads HRETEGEEQA…VNKSKLLTDV (80 aa). Phosphoserine is present on residues Ser-437 and Ser-439. Ser-446 is subject to Phosphoserine; by PKA. The PDZ-binding signature appears at 493 to 495; that stretch reads TDV.

This sequence belongs to the potassium channel family. A (Shaker) (TC 1.A.1.2) subfamily. Kv1.1/KCNA1 sub-subfamily. In terms of assembly, homotetramer and heterotetramer with other channel-forming alpha subunits, such as KCNA2, KCNA4, KCNA5, KCNA6 and KCNA7. Channel activity is regulated by interaction with the beta subunits KCNAB1 and KCNAB2. Identified in a complex with KCNA2 and KCNAB2. Interacts (via C-terminus) with the PDZ domains of DLG1, DLG2 and DLG4. Interacts with LGI1 within a complex containing LGI1, KCNA4 and KCNAB1. Interacts (via N-terminus) with STX1A; this promotes channel inactivation. Interacts (via N-terminus) with the heterodimer formed by GNB1 and GNG2; this promotes channel inactivation. Can interact simultaneously with STX1A and the heterodimer formed by GNB1 and GNG2. Interacts (via cytoplasmic N-terminal domain) with KCNRG; this inhibits channel activity. Interacts with ANK3; this inhibits channel activity. Interacts with ADAM11. Post-translationally, N-glycosylated. Palmitoylated on Cys-243; which may be required for membrane targeting. In terms of processing, phosphorylated on tyrosine residues. Phosphorylation increases in response to NRG1; this inhibits channel activity. Phosphorylation at Ser-446 regulates channel activity by down-regulating expression at the cell membrane. In terms of tissue distribution, detected adjacent to nodes of Ranvier in juxtaparanodal zones in spinal cord nerve fibers, but also in paranodal regions in some myelinated spinal cord axons (at protein level). Detected in the islet of Langerhans.

It is found in the cell membrane. The protein localises to the membrane. Its subcellular location is the cell projection. It localises to the axon. The protein resides in the cytoplasmic vesicle. It is found in the perikaryon. The protein localises to the endoplasmic reticulum. Its subcellular location is the dendrite. It localises to the cell junction. The protein resides in the synapse. It is found in the presynaptic cell membrane. The protein localises to the presynapse. It catalyses the reaction K(+)(in) = K(+)(out). Inhibited by 1.1 mM 4-aminopyridine (4-AP) and by 20 mM tetraethylammonium (TEA), but not by charybdotoxin (CTX). Inhibited by dendrotoxin (DTX). Voltage-gated potassium channel that mediates transmembrane potassium transport in excitable membranes, primarily in the brain and the central nervous system, but also in the kidney. Contributes to the regulation of the membrane potential and nerve signaling, and prevents neuronal hyperexcitability. Forms tetrameric potassium-selective channels through which potassium ions pass in accordance with their electrochemical gradient. The channel alternates between opened and closed conformations in response to the voltage difference across the membrane. Can form functional homotetrameric channels and heterotetrameric channels that contain variable proportions of KCNA1, KCNA2, KCNA4, KCNA5, KCNA6, KCNA7, and possibly other family members as well; channel properties depend on the type of alpha subunits that are part of the channel. Channel properties are modulated by cytoplasmic beta subunits that regulate the subcellular location of the alpha subunits and promote rapid inactivation of delayed rectifier potassium channels. In vivo, membranes probably contain a mixture of heteromeric potassium channel complexes, making it difficult to assign currents observed in intact tissues to any particular potassium channel family member. Homotetrameric KCNA1 forms a delayed-rectifier potassium channel that opens in response to membrane depolarization, followed by slow spontaneous channel closure. In contrast, a heterotetrameric channel formed by KCNA1 and KCNA4 shows rapid inactivation. Regulates neuronal excitability in hippocampus, especially in mossy fibers and medial perforant path axons, preventing neuronal hyperexcitability. Response to toxins that are selective for KCNA1, respectively for KCNA2, suggests that heteromeric potassium channels composed of both KCNA1 and KCNA2 play a role in pacemaking and regulate the output of deep cerebellar nuclear neurons. May function as down-stream effector for G protein-coupled receptors and inhibit GABAergic inputs to basolateral amygdala neurons. May contribute to the regulation of neurotransmitter release, such as gamma-aminobutyric acid (GABA) release. Plays a role in regulating the generation of action potentials and preventing hyperexcitability in myelinated axons of the vagus nerve, and thereby contributes to the regulation of heart contraction. Required for normal neuromuscular responses. Regulates the frequency of neuronal action potential firing in response to mechanical stimuli, and plays a role in the perception of pain caused by mechanical stimuli, but does not play a role in the perception of pain due to heat stimuli. Required for normal responses to auditory stimuli and precise location of sound sources, but not for sound perception. The use of toxins that block specific channels suggest that it contributes to the regulation of the axonal release of the neurotransmitter dopamine. Required for normal postnatal brain development and normal proliferation of neuronal precursor cells in the brain. Plays a role in the reabsorption of Mg(2+) in the distal convoluted tubules in the kidney and in magnesium ion homeostasis, probably via its effect on the membrane potential. In Homo sapiens (Human), this protein is Potassium voltage-gated channel subfamily A member 1.